A 714-amino-acid polypeptide reads, in one-letter code: RB-associated KRAB zinc finger protein (714 aa).

The KRAB domain maps to 8-79 (VSFKDVAVDF…GGEFPCQHSP (72 aa)). Glycyl lysine isopeptide (Lys-Gly) (interchain with G-Cter in SUMO2) cross-links involve residues Lys-97 and Lys-259. Residues 171–260 (TYHGEKMCEF…YQRSQMEMKP (90 aa)) are required for interaction with RB1. 2 consecutive C2H2-type zinc fingers follow at residues 261–283 (FECS…QRAH) and 289–311 (YECN…RRSH). Lys-315 participates in a covalent cross-link: Glycyl lysine isopeptide (Lys-Gly) (interchain with G-Cter in SUMO2). 7 consecutive C2H2-type zinc fingers follow at residues 317-339 (YKCN…LRTH), 345-367 (YECS…QRNH), 373-395 (YPCN…QRTH), 401-423 (YKCN…QRTH), 429-451 (YQCS…YRSH), 457-479 (YECN…RKVH), and 485-505 (HECS…HTAH). Lys-357 participates in a covalent cross-link: Glycyl lysine isopeptide (Lys-Gly) (interchain with G-Cter in SUMO2). Residues 417–714 (ITHQRTHTGE…NMNVLDVENL (298 aa)) form an interaction with AR region. Residues 511–533 (YECNECGKTFLVNSAFDGHQPLP) form a C2H2-type 10; degenerate zinc finger. Glycyl lysine isopeptide (Lys-Gly) (interchain with G-Cter in SUMO2) cross-links involve residues Lys-534 and Lys-537. 6 C2H2-type zinc fingers span residues 539–561 (YECN…YRSH), 567–589 (YGCS…QRVH), 595–617 (YECY…HRIH), 623–645 (YECS…YRSH), 651–673 (YECN…YRTH), and 679–701 (YECN…QRIH).

The protein belongs to the krueppel C2H2-type zinc-finger protein family. As to quaternary structure, interacts with AR and RB1. May also interact with other nuclear hormone receptors such as NR3C1/GR. As to expression, expressed in bone, brain, heart, kidney, liver, lung, pancreas and placenta.

Its subcellular location is the nucleus. Its function is as follows. May repress E2F-dependent transcription. May promote AR-dependent transcription. The sequence is that of RB-associated KRAB zinc finger protein (RBAK) from Homo sapiens (Human).